A 97-amino-acid polypeptide reads, in one-letter code: YcgL domain-containing protein PSPPH_1548 (97 aa).

One can recognise a YcgL domain in the interval 3–87; it reads RICSIYRSPK…AEDDYIEHLP (85 aa).

This Pseudomonas savastanoi pv. phaseolicola (strain 1448A / Race 6) (Pseudomonas syringae pv. phaseolicola (strain 1448A / Race 6)) protein is YcgL domain-containing protein PSPPH_1548.